The chain runs to 343 residues: Selenide, water dikinase (343 aa).

Sec-13 is an active-site residue. Position 13 (Sec-13) is a non-standard amino acid, selenocysteine. ATP-binding positions include Lys-16 and 44–46 (TAD). Mg(2+) is bound at residue Asp-47. ATP contacts are provided by residues Asp-64, Asp-87, and 135 to 137 (GHT). Asp-87 is a binding site for Mg(2+). Asp-223 provides a ligand contact to Mg(2+).

Belongs to the selenophosphate synthase 1 family. Class I subfamily. Homodimer. The cofactor is Mg(2+).

It carries out the reaction hydrogenselenide + ATP + H2O = selenophosphate + AMP + phosphate + 2 H(+). Its function is as follows. Synthesizes selenophosphate from selenide and ATP. This is Selenide, water dikinase from Geobacter metallireducens (strain ATCC 53774 / DSM 7210 / GS-15).